Here is a 337-residue protein sequence, read N- to C-terminus: DNA-directed RNA polymerase subunit alpha (337 aa).

The alpha N-terminal domain (alpha-NTD) stretch occupies residues 1–233 (MVREEVVGST…DLFIPFLHAE (233 aa)). The alpha C-terminal domain (alpha-CTD) stretch occupies residues 265 to 337 (KEIALKCIFI…FAIDLPKNKF (73 aa)).

Belongs to the RNA polymerase alpha chain family. As to quaternary structure, in plastids the minimal PEP RNA polymerase catalytic core is composed of four subunits: alpha, beta, beta', and beta''. When a (nuclear-encoded) sigma factor is associated with the core the holoenzyme is formed, which can initiate transcription.

The protein resides in the plastid. It localises to the chloroplast. It carries out the reaction RNA(n) + a ribonucleoside 5'-triphosphate = RNA(n+1) + diphosphate. Its function is as follows. DNA-dependent RNA polymerase catalyzes the transcription of DNA into RNA using the four ribonucleoside triphosphates as substrates. This chain is DNA-directed RNA polymerase subunit alpha, found in Acorus calamus (Sweet flag).